Here is a 328-residue protein sequence, read N- to C-terminus: Probable voltage-gated potassium channel subunit beta (328 aa).

Positions 21, 27, and 49 each coordinate NADP(+). The Proton donor/acceptor role is filled by Y54. 14 residues coordinate NADP(+): S152, Q178, W207, S208, P209, L210, A211, K218, R229, G285, T287, Q291, E294, and N295.

This sequence belongs to the shaker potassium channel beta subunit family. Forms heteromultimeric complexes with potassium channel alpha subunits. In terms of tissue distribution, expressed in late-developed leaves with the highest expression in the flag leaf (at protein level).

Functionally, probable accessory potassium channel protein which modulates the activity of the pore-forming alpha subunit. The protein is Probable voltage-gated potassium channel subunit beta (KOB1) of Oryza sativa subsp. japonica (Rice).